The primary structure comprises 544 residues: Methyl-accepting chemotaxis protein McpP (544 aa).

Helical transmembrane passes span R12 to L32, V50 to L70, and D192 to A212. The region spanning R213–G267 is the HAMP domain. Residues A272–A508 form the Methyl-accepting transducer domain.

The protein belongs to the methyl-accepting chemotaxis (MCP) protein family.

The protein localises to the cell membrane. Functionally, chemotactic-signal transducers respond to changes in the concentration of attractants and repellents in the environment, transduce a signal from the outside to the inside of the cell, and facilitate sensory adaptation through the variation of the level of methylation. McpP is a chemoreceptor that responds specifically to some C2 and C3 carboxylic acids. Recognizes acetate, pyruvate, propionate, and L-lactate. The sequence is that of Methyl-accepting chemotaxis protein McpP from Pseudomonas putida (strain ATCC 47054 / DSM 6125 / CFBP 8728 / NCIMB 11950 / KT2440).